The following is a 202-amino-acid chain: Josephin-1 (202 aa).

Phosphoserine is present on Ser-15. A Josephin domain is found at 23-202 (PPQIYHEKQR…EAHQSWRTDV (180 aa)). Residue Cys-36 is the Nucleophile of the active site. Residue His-139 is the Proton acceptor of the active site.

Interacts with beta-actin/ACTB. Monoubiquitinated. Ubiquitination activates deubiquitination activity in vitro.

Its subcellular location is the cell membrane. The protein resides in the cytoplasm. The enzyme catalyses Thiol-dependent hydrolysis of ester, thioester, amide, peptide and isopeptide bonds formed by the C-terminal Gly of ubiquitin (a 76-residue protein attached to proteins as an intracellular targeting signal).. Its function is as follows. Deubiquitinates monoubiquitinated probes (in vitro). When ubiquitinated, cleaves 'Lys-63'-linked and 'Lys-48'-linked poly-ubiquitin chains (in vitro), hence may act as a deubiquitinating enzyme. May increase macropinocytosis and suppress clathrin- and caveolae-mediated endocytosis. May enhance membrane dynamics and cell motility independently of its catalytic activity. This is Josephin-1 (JOSD1) from Pongo abelii (Sumatran orangutan).